We begin with the raw amino-acid sequence, 324 residues long: Concanavalin B (324 aa).

Residues 1 to 25 form the signal peptide; sequence MGCERKALILMVVIWIMSFWTLSLA. The region spanning 30-311 is the GH18 domain; that stretch reads TEIAVYWGQR…TNIIRYLNAT (282 aa). Residue N309 is glycosylated (N-linked (GlcNAc...) asparagine).

Belongs to the glycosyl hydrolase 18 family.

Functionally, may act as a carbohydrate-binding protein. The polypeptide is Concanavalin B (Canavalia ensiformis (Jack bean)).